Reading from the N-terminus, the 405-residue chain is Phosphopentomutase (405 aa).

Mn(2+)-binding residues include Asp10, Asp303, His308, Asp344, His345, and His356.

It belongs to the phosphopentomutase family. The cofactor is Mn(2+).

Its subcellular location is the cytoplasm. The catalysed reaction is 2-deoxy-alpha-D-ribose 1-phosphate = 2-deoxy-D-ribose 5-phosphate. It carries out the reaction alpha-D-ribose 1-phosphate = D-ribose 5-phosphate. The protein operates within carbohydrate degradation; 2-deoxy-D-ribose 1-phosphate degradation; D-glyceraldehyde 3-phosphate and acetaldehyde from 2-deoxy-alpha-D-ribose 1-phosphate: step 1/2. Isomerase that catalyzes the conversion of deoxy-ribose 1-phosphate (dRib-1-P) and ribose 1-phosphate (Rib-1-P) to deoxy-ribose 5-phosphate (dRib-5-P) and ribose 5-phosphate (Rib-5-P), respectively. This chain is Phosphopentomutase, found in Shewanella woodyi (strain ATCC 51908 / MS32).